A 552-amino-acid polypeptide reads, in one-letter code: Transcription factor lcsF (552 aa).

Disordered regions lie at residues Met1–Pro132, Thr169–Ser209, Glu232–Ser258, and Glu297–Ala349. The tract at residues Lys31 to Arg55 is basic motif. Residues Lys31–Glu76 form the bZIP domain. The segment at Leu56–Leu63 is leucine-zipper. Residues Gln64–Asp79 are compositionally biased toward basic and acidic residues. Composition is skewed to polar residues over residues Thr98–Ser119 and Thr169–Gln186. Over residues Leu298–His347 the composition is skewed to polar residues.

This sequence belongs to the bZIP family.

It is found in the nucleus. In terms of biological role, transcription factor that regulates the expression of the gene cluster that mediates the biosynthesis of the lipopeptide antibiotics leucinostatins that show extensive biological activities, including antimalarial, antiviral, antibacterial, antifungal, and antitumor activities, as well as phytotoxic. All 20 genes in the cluster are up-regulated to some extent by lcsF, with the exception of lcsL and lcsP, which are down-regulated. This chain is Transcription factor lcsF, found in Purpureocillium lilacinum (Paecilomyces lilacinus).